The chain runs to 259 residues: HTH-type transcriptional regulator TtgV (259 aa).

One can recognise an HTH iclR-type domain in the interval 14–76 (IQVIARAASI…GPAGGFRLGP (63 aa)). Residues 36-59 (LAAIAQLVGLPRSTVQRIINALEE) constitute a DNA-binding region (H-T-H motif). The region spanning 89 to 253 (ILSLVKPYLR…KLNIERAIGR (165 aa)) is the IclR-ED domain.

Represses the expression of the ttgGHI and ttgVW operons. Binds to the ttgGHI / ttgVW intergenic region, probably preventing binding of RNA polymerase; ttgV dissociates from this region in the presence of 1-hexanol. This Pseudomonas putida (strain DOT-T1E) protein is HTH-type transcriptional regulator TtgV (ttgV).